A 179-amino-acid polypeptide reads, in one-letter code: Large ribosomal subunit protein uL5 (179 aa).

In terms of assembly, contacts the P site tRNA. Forms a bridge to the 30S subunit in the 70S ribosome. Part of the 50S ribosomal subunit. Part of the 5S rRNA/L5/L18 subcomplex; in this organism only 2 proteins, L5 and L18 have been shown to be part of the 5S rRNA subcomplex, unlike E.coli and T.thermophilus where L25 (TL5) is also found. Has been shown to bind 5S rRNA.

This is one of the proteins that bind and probably mediate the attachment of the 5S RNA into the large ribosomal subunit, where it forms part of the central protuberance. In the 70S ribosome it contacts protein S13 of the 30S subunit (bridge B1b), connecting the 2 subunits; this bridge is implicated in subunit movement. Contacts the P site tRNA; the 5S rRNA and some of its associated proteins might help stabilize positioning of ribosome-bound tRNAs. The protein is Large ribosomal subunit protein uL5 (rplE) of Geobacillus stearothermophilus (Bacillus stearothermophilus).